Here is a 158-residue protein sequence, read N- to C-terminus: Ribonuclease H (158 aa).

The 142-residue stretch at 3-144 folds into the RNase H type-1 domain; the sequence is GLKQLLIFTD…CDTLAREAAE (142 aa). Mg(2+)-binding residues include aspartate 12, glutamate 50, aspartate 72, and aspartate 136.

The protein belongs to the RNase H family. As to quaternary structure, monomer. Requires Mg(2+) as cofactor.

The protein localises to the cytoplasm. It carries out the reaction Endonucleolytic cleavage to 5'-phosphomonoester.. Functionally, endonuclease that specifically degrades the RNA of RNA-DNA hybrids. This Shewanella loihica (strain ATCC BAA-1088 / PV-4) protein is Ribonuclease H.